The primary structure comprises 588 residues: Nucleoporin ndc-1 (588 aa).

A compositionally biased stretch (polar residues) spans 1-12 (MMGDSHSSFTTT). Positions 1–55 (MMGDSHSSFTTTTDEHLYNQFSPGRRKNDFPAASSSSSSPNLRRSPNRTVSSPRV) are disordered. The Cytoplasmic segment spans residues 1–79 (MMGDSHSSFT…FQAEISVRKR (79 aa)). Over residues 31-48 (PAASSSSSSPNLRRSPNR) the composition is skewed to low complexity. The helical transmembrane segment at 80–100 (LAGAACGYLSTIFFIVTVSIL) threads the bilayer. Over 101–122 (KLTIWAPFSSVQDSLAWWIYPN) the chain is Perinuclear space. The helical transmembrane segment at 123–143 (AWASIIFVGIASVAMSLFSII) threads the bilayer. Residues 144–159 (KFCKVDQLPRLAATDT) are Cytoplasmic-facing. A helical membrane pass occupies residues 160 to 180 (FALAGVALEFVTRLTFVYTAF). Over 181–190 (CVADFSFSRE) the chain is Perinuclear space. A helical membrane pass occupies residues 191–211 (FAFVAISLAIAISSALVVFRS). Over 212-255 (DYQLNFSHIQVNSVKTLIDFGTSLPYANISEICGIDAAISYTAA) the chain is Cytoplasmic. The chain crosses the membrane as a helical span at residues 256 to 276 (VALILVVGPMVSGFSAWWLLL). Residue Asn-277 is a topological domain, perinuclear space. Residues 278 to 298 (IPFHVVLFGLCFTQQFYSKIS) traverse the membrane as a helical segment. The Cytoplasmic portion of the chain corresponds to 299 to 588 (MKIVNQIVMK…IRMICLTDEL (290 aa)).

It belongs to the NDC1 family.

Its subcellular location is the nucleus. The protein resides in the nuclear pore complex. The protein localises to the nucleus membrane. Component of the nuclear pore complex (NPC), which plays a key role in de novo assembly and insertion of NPC in the nuclear envelope. Plays a role in postmitotic nuclear pore complex assembly potentially by promoting localization of nuclear pore complex proteins to the nuclear rim. The protein is Nucleoporin ndc-1 of Caenorhabditis elegans.